We begin with the raw amino-acid sequence, 347 residues long: uncharacterized protein (347 aa).

Topologically, residues 1-44 (MWNPKKKSEALAKFKSFPYPKPGTSNVLDSKEGDTRRKYFTKTH) are cytoplasmic. Residues 45 to 62 (LHRLFVFVVLLLCSGYFL) traverse the membrane as a helical; Signal-anchor for type II membrane protein segment. The Lumenal portion of the chain corresponds to 63–347 (KHTLLTRPKE…RGWRKLVPFL (285 aa)).

The protein belongs to the glycosyltransferase 34 family.

The protein resides in the endoplasmic reticulum membrane. This is an uncharacterized protein from Schizosaccharomyces pombe (strain 972 / ATCC 24843) (Fission yeast).